The sequence spans 302 residues: Tyrosine recombinase XerC (302 aa).

Positions 2–89 (QPLMEQIRAF…AIRSFYRHLL (88 aa)) constitute a Core-binding (CB) domain. The region spanning 110-289 (RLPFHLDIDQ…SLDRLMEVYD (180 aa)) is the Tyr recombinase domain. Residues R150, K174, H241, R244, and H267 contribute to the active site. Y276 (O-(3'-phospho-DNA)-tyrosine intermediate) is an active-site residue.

This sequence belongs to the 'phage' integrase family. XerC subfamily. Forms a cyclic heterotetrameric complex composed of two molecules of XerC and two molecules of XerD.

It is found in the cytoplasm. Functionally, site-specific tyrosine recombinase, which acts by catalyzing the cutting and rejoining of the recombining DNA molecules. The XerC-XerD complex is essential to convert dimers of the bacterial chromosome into monomers to permit their segregation at cell division. It also contributes to the segregational stability of plasmids. The sequence is that of Tyrosine recombinase XerC from Pelobacter propionicus (strain DSM 2379 / NBRC 103807 / OttBd1).